Here is a 350-residue protein sequence, read N- to C-terminus: Phosphoribosylformylglycinamidine cyclo-ligase (350 aa).

It belongs to the AIR synthase family.

The protein localises to the cytoplasm. The catalysed reaction is 2-formamido-N(1)-(5-O-phospho-beta-D-ribosyl)acetamidine + ATP = 5-amino-1-(5-phospho-beta-D-ribosyl)imidazole + ADP + phosphate + H(+). It participates in purine metabolism; IMP biosynthesis via de novo pathway; 5-amino-1-(5-phospho-D-ribosyl)imidazole from N(2)-formyl-N(1)-(5-phospho-D-ribosyl)glycinamide: step 2/2. This Cupriavidus necator (strain ATCC 17699 / DSM 428 / KCTC 22496 / NCIMB 10442 / H16 / Stanier 337) (Ralstonia eutropha) protein is Phosphoribosylformylglycinamidine cyclo-ligase.